Consider the following 345-residue polypeptide: GTPase Obg (345 aa).

The region spanning 1–159 (MKFLDQAKVY…KWIWLRLKLI (159 aa)) is the Obg domain. Residues 160–327 (ADAGLVGLPN…ALRALLAVID (168 aa)) enclose the OBG-type G domain. Residues 166–173 (GLPNAGKS), 191–195 (FTTLH), 212–215 (DIPG), 279–282 (SKID), and 308–310 (SSQ) contribute to the GTP site. Ser173 and Thr193 together coordinate Mg(2+).

It belongs to the TRAFAC class OBG-HflX-like GTPase superfamily. OBG GTPase family. As to quaternary structure, monomer. Mg(2+) is required as a cofactor.

It localises to the cytoplasm. Its function is as follows. An essential GTPase which binds GTP, GDP and possibly (p)ppGpp with moderate affinity, with high nucleotide exchange rates and a fairly low GTP hydrolysis rate. Plays a role in control of the cell cycle, stress response, ribosome biogenesis and in those bacteria that undergo differentiation, in morphogenesis control. The polypeptide is GTPase Obg (Azorhizobium caulinodans (strain ATCC 43989 / DSM 5975 / JCM 20966 / LMG 6465 / NBRC 14845 / NCIMB 13405 / ORS 571)).